A 141-amino-acid chain; its full sequence is ATP synthase epsilon chain (141 aa).

Belongs to the ATPase epsilon chain family. F-type ATPases have 2 components, CF(1) - the catalytic core - and CF(0) - the membrane proton channel. CF(1) has five subunits: alpha(3), beta(3), gamma(1), delta(1), epsilon(1). CF(0) has three main subunits: a, b and c.

The protein resides in the cell membrane. Functionally, produces ATP from ADP in the presence of a proton gradient across the membrane. The sequence is that of ATP synthase epsilon chain from Mycoplasma mobile (strain ATCC 43663 / 163K / NCTC 11711) (Mesomycoplasma mobile).